A 553-amino-acid chain; its full sequence is uncharacterized protein (553 aa).

This is an uncharacterized protein from Rickettsia prowazekii (strain Madrid E).